Consider the following 724-residue polypeptide: Semaphorin-2A (724 aa).

An N-terminal signal peptide occupies residues methionine 1 to alanine 25. The Sema domain maps to glutamine 45–leucine 522. Asparagine 95 carries an N-linked (GlcNAc...) asparagine glycan. Cysteine 118 and cysteine 129 form a disulfide bridge. Asparagine 163, asparagine 190, asparagine 229, and asparagine 314 each carry an N-linked (GlcNAc...) asparagine glycan. Cystine bridges form between cysteine 291–cysteine 399 and cysteine 315–cysteine 358. The N-linked (GlcNAc...) asparagine glycan is linked to asparagine 401. Intrachain disulfides connect cysteine 525–cysteine 541 and cysteine 535–cysteine 550. Residues proline 552–alanine 663 enclose the Ig-like C2-type domain. Asparagine 563 carries an N-linked (GlcNAc...) asparagine glycan. Cysteine 590 and cysteine 647 are joined by a disulfide. Asparagine 658, asparagine 670, and asparagine 708 each carry an N-linked (GlcNAc...) asparagine glycan.

This sequence belongs to the semaphorin family. Interacts with PlexB. In terms of tissue distribution, transiently expressed by a single large muscle during motoneuron outgrowth and synapse formation.

The protein resides in the secreted. In terms of biological role, ligand for transmembrane receptor PlexB. Plays a role in growth cone guidance. Required for both proper adult behavior and survival. Can function as a selective target-derived signal that inhibits the formation of specific synaptic terminal arbors. Function in neurons is essential for adult survival, motor neuron survival, and is important for climbing behavior and activity. During embryogenesis, plays an important role in correct salivary gland positioning. This is Semaphorin-2A from Drosophila melanogaster (Fruit fly).